The sequence spans 337 residues: Nucleotide sugar transporter SLC35D2 (337 aa).

Residues 1–27 (MTAGGQAEAEGAGGEPGAARLPSRVAR) are Cytoplasmic-facing. A helical transmembrane segment spans residues 28-48 (LLSALFYGTCSFLIVLVNKAL). The Extracellular segment spans residues 49 to 53 (LTTYG). The chain crosses the membrane as a helical span at residues 54–74 (FPSPIFLGIGQMAATIMILYV). Residues 75 to 146 (SKLNKIIHFP…IILGKQYSLN (72 aa)) lie on the Cytoplasmic side of the membrane. A run of 2 helical transmembrane segments spans residues 147–167 (IILSVFAIILGAFIAAGSDLA) and 168–188 (FNLEGYIFVFLNDIFTAANGV). At 189 to 201 (YTKQKMDPKELGK) the chain is on the cytoplasmic side. Residues 202–222 (YGVLFYNACFMIIPTLIISVS) form a helical membrane-spanning segment. The Extracellular portion of the chain corresponds to 223-237 (TGDLQQATEFNQWKN). The chain crosses the membrane as a helical span at residues 238 to 258 (VVFILQFLLSCFLGFLLMYST). Over 259-265 (VLCSYYN) the chain is Cytoplasmic. Residues 266–288 (SALTTAVVGAIKNVSVAYIGILI) form a helical membrane-spanning segment. The Extracellular segment spans residues 289–292 (GGDY). Residues 293–315 (IFSLLNFVGLNICMAGGLRYSFL) traverse the membrane as a helical segment. At 316-337 (TLSSQLKPKPVGEENICLDLKS) the chain is on the cytoplasmic side.

It belongs to the TPT transporter family. SLC35D subfamily. Highly expressed in heart, kidney, small intestine, placenta, lung and peripheral blood leukocyte. Weakly expressed in skeletal muscle and spleen. Not expressed in brain, colon and thymus.

It is found in the golgi apparatus membrane. The enzyme catalyses UMP(out) + UDP-N-acetyl-alpha-D-glucosamine(in) = UMP(in) + UDP-N-acetyl-alpha-D-glucosamine(out). The catalysed reaction is UMP(out) + UDP-alpha-D-glucose(in) = UMP(in) + UDP-alpha-D-glucose(out). Functionally, nucleotide sugar antiporter transporting UDP-N-acetylglucosamine (UDP-GlcNAc) and UDP-glucose (UDP-Glc) from the cytosol into the lumen of the Golgi in exchange of UMP. By supplying UDP-N-acetylglucosamine, a donor substrate to heparan sulfate synthases, probably takes part in the synthesis of these glycoconjugates. In Homo sapiens (Human), this protein is Nucleotide sugar transporter SLC35D2.